The primary structure comprises 503 residues: Na(+)-translocating NADH-quinone reductase subunit B (503 aa).

Helical transmembrane passes span 55–75 (MMLVVIALFPATFLAIWNSGI), 120–140 (IFLPLLIISYTVGGACEVLFA), 161–181 (TLPPTIPYWMAALGIAFGVVV), and 186–206 (FGGTGMNILNPALSGRAFLFF). Residue T248 is modified to FMN phosphoryl threonine. The next 5 helical transmembrane spans lie at 361–381 (TSTFACLLGAVFLVITGIASW), 387–407 (FGIGAFVTAWLFKICSILIAG), 417–437 (FFIPAYRQLFLGGLAFGLVFM), 452–472 (WIYGLFIGFMTIIIRLINPAY), and 475–495 (GVMLAILLGNVFAPLLDYFAV).

Belongs to the NqrB/RnfD family. Composed of six subunits; NqrA, NqrB, NqrC, NqrD, NqrE and NqrF. FMN serves as cofactor.

It is found in the cell inner membrane. It catalyses the reaction a ubiquinone + n Na(+)(in) + NADH + H(+) = a ubiquinol + n Na(+)(out) + NAD(+). In terms of biological role, NQR complex catalyzes the reduction of ubiquinone-1 to ubiquinol by two successive reactions, coupled with the transport of Na(+) ions from the cytoplasm to the periplasm. NqrA to NqrE are probably involved in the second step, the conversion of ubisemiquinone to ubiquinol. The polypeptide is Na(+)-translocating NADH-quinone reductase subunit B (Chlamydia abortus (strain DSM 27085 / S26/3) (Chlamydophila abortus)).